A 269-amino-acid polypeptide reads, in one-letter code: DNA-binding protein RFXANK (269 aa).

Residues 1–36 (MEPTQVAENLVPNQQPPVPDLEDPEDTRDESPENSD) are disordered. ANK repeat units lie at residues 88–127 (LDSLSIHQLAAQGELSQLKDHLRKGACPACTCLSGNNLIN), 132–161 (RGFTPLIWASAFGEIETVRFLLDWGADPHI), 165–194 (ERESALSLASMGGYTDIVRLLLDRDVDINI), 198–227 (NGGTPLLYAVRGNHVKCVEALLARGADLTT), and 231–260 (SGYTPMDLAVALGYRKVQQVMESHILRLFQ).

As to quaternary structure, forms homodimers. The RFX heterotetrameric complex consists of 2 molecules of RFX5 and one each of RFXAP and RFX-B/RFXANK; with each subunit representing a separate complementation group. Interacts (via ankyrin repeats) with RFX5 (via PxLPxI/L motif); the interaction is direct. RFX forms cooperative DNA binding complexes with X2BP and CBF/NF-Y. RFX associates with CIITA to form an active transcriptional complex. Interacts with RAF1. Interacts with RFX7. In terms of processing, phosphorylated by RAF1. As to expression, expressed primarily in thymus, lung and testis.

The protein resides in the cytoplasm. The protein localises to the nucleus. Its function is as follows. Activates transcription from class II MHC promoters. Activation requires the activity of the MHC class II transactivator/CIITA. May regulate other genes in the cell. RFX binds the X1 box of MHC-II promoters. May also potentiate the activation of RAF1. In Mus musculus (Mouse), this protein is DNA-binding protein RFXANK (Rfxank).